Reading from the N-terminus, the 401-residue chain is Riboflavin biosynthesis protein RibBA (401 aa).

Positions 1–203 are DHBP synthase; it reads MTDFQFSKVE…IQQLQEYRRK (203 aa). Residues 30–31, Asp35, 142–146, and Glu166 contribute to the D-ribulose 5-phosphate site; these read RE and RNGHT. Mg(2+) is bound at residue Glu31. Residue His145 coordinates Mg(2+). The segment at 204–401 is GTP cyclohydrolase II; the sequence is HDSLVKQISV…QIKMGHMFNF (198 aa). Residue 254–258 coordinates GTP; it reads RIHSE. Zn(2+)-binding residues include Cys259, Cys270, and Cys272. GTP contacts are provided by residues Gln275, 297 to 299, and Thr319; that span reads EGR. Asp331 serves as the catalytic Proton acceptor; for GTP cyclohydrolase activity. Residue Arg333 is the Nucleophile; for GTP cyclohydrolase activity of the active site. GTP-binding residues include Thr354 and Lys359.

It in the N-terminal section; belongs to the DHBP synthase family. This sequence in the C-terminal section; belongs to the GTP cyclohydrolase II family. The cofactor is Mg(2+). It depends on Mn(2+) as a cofactor. Zn(2+) is required as a cofactor.

It catalyses the reaction D-ribulose 5-phosphate = (2S)-2-hydroxy-3-oxobutyl phosphate + formate + H(+). The enzyme catalyses GTP + 4 H2O = 2,5-diamino-6-hydroxy-4-(5-phosphoribosylamino)-pyrimidine + formate + 2 phosphate + 3 H(+). It functions in the pathway cofactor biosynthesis; riboflavin biosynthesis; 2-hydroxy-3-oxobutyl phosphate from D-ribulose 5-phosphate: step 1/1. It participates in cofactor biosynthesis; riboflavin biosynthesis; 5-amino-6-(D-ribitylamino)uracil from GTP: step 1/4. Functionally, catalyzes the conversion of D-ribulose 5-phosphate to formate and 3,4-dihydroxy-2-butanone 4-phosphate. Catalyzes the conversion of GTP to 2,5-diamino-6-ribosylamino-4(3H)-pyrimidinone 5'-phosphate (DARP), formate and pyrophosphate. This Actinobacillus pleuropneumoniae serotype 5b (strain L20) protein is Riboflavin biosynthesis protein RibBA.